Here is a 243-residue protein sequence, read N- to C-terminus: 1-(5-phosphoribosyl)-5-[(5-phosphoribosylamino)methylideneamino] imidazole-4-carboxamide isomerase (243 aa).

Aspartate 8 (proton acceptor) is an active-site residue. The Proton donor role is filled by aspartate 129.

It belongs to the HisA/HisF family.

It is found in the cytoplasm. It carries out the reaction 1-(5-phospho-beta-D-ribosyl)-5-[(5-phospho-beta-D-ribosylamino)methylideneamino]imidazole-4-carboxamide = 5-[(5-phospho-1-deoxy-D-ribulos-1-ylimino)methylamino]-1-(5-phospho-beta-D-ribosyl)imidazole-4-carboxamide. It participates in amino-acid biosynthesis; L-histidine biosynthesis; L-histidine from 5-phospho-alpha-D-ribose 1-diphosphate: step 4/9. The protein is 1-(5-phosphoribosyl)-5-[(5-phosphoribosylamino)methylideneamino] imidazole-4-carboxamide isomerase of Carboxydothermus hydrogenoformans (strain ATCC BAA-161 / DSM 6008 / Z-2901).